The primary structure comprises 340 residues: MSTAVINTDDDQLEPTLQSILDQKSLRWIFVGGKGGVGKTTTSCSLAIQLAKVRRSVLLISTDPAHNLSDAFSQKFGKEARLINGFENLSAMEIDPNGSIQELMGQAEEGEGPAAGMGGMMQDLAFAIPGIDEAMSFAEVLKQVKSLSYETIIFDTAPTGHTLRFLQFPTVLEKALAKVSQLSTQFGPMLNGLLGANGSLPNGQNLGEMMEKLEGLRETISEVNGQFKDENLTTFVCVCIPEFLSLYETERMIQELSSYHIDTHCIVVNQLLFPKKGSDCDQCNARRKMQKKYLEQIEELYDEFNVVKMPLLVEEVRGKERLEKFSEMLITPYVPPAGGL.

ATP is bound at residue 34–41 (KGGVGKTT). Residue aspartate 63 is part of the active site. 2 residues coordinate ATP: glutamate 242 and asparagine 269. Positions 280 and 283 each coordinate Zn(2+).

Belongs to the arsA ATPase family. As to quaternary structure, homodimer.

Its subcellular location is the cytoplasm. It localises to the endoplasmic reticulum. In terms of biological role, ATPase required for the post-translational delivery of tail-anchored (TA) proteins to the endoplasmic reticulum. Recognizes and selectively binds the transmembrane domain of TA proteins in the cytosol. This complex then targets to the endoplasmic reticulum by membrane-bound receptors, where the tail-anchored protein is released for insertion. This process is regulated by ATP binding and hydrolysis. ATP binding drives the homodimer towards the closed dimer state, facilitating recognition of newly synthesized TA membrane proteins. ATP hydrolysis is required for insertion. Subsequently, the homodimer reverts towards the open dimer state, lowering its affinity for the membrane-bound receptor, and returning it to the cytosol to initiate a new round of targeting. The protein is ATPase get3 (get3) of Sclerotinia sclerotiorum (strain ATCC 18683 / 1980 / Ss-1) (White mold).